The sequence spans 657 residues: Broad substrate specificity ATP-binding cassette transporter ABCG2 (657 aa).

Positions 1-24 (MSSSNDHVLVPMSQRNNNGLPRTN) are disordered. The Cytoplasmic segment spans residues 1 to 393 (MSSSNDHVLV…SFKNLLGNPQ (393 aa)). Positions 13–24 (SQRNNNGLPRTN) are enriched in polar residues. The region spanning 48 to 285 (VKSGFLVRKT…FASAGYHCEP (238 aa)) is the ABC transporter domain. Residues 79-86 (GPTGGGKS), 183-189 (RGISGGE), Glu210, and His242 contribute to the ATP site. In terms of domain architecture, ABC transmembrane type-2 spans 389–653 (LGNPQASVAQ…TIAYLKLLFL (265 aa)). Residues 394-414 (ASVAQLIVTVILGLIIGAIYF) form a helical membrane-spanning segment. The Extracellular portion of the chain corresponds to 415–428 (DLKYDAAGMQNRAG). The chain crosses the membrane as a helical span at residues 429 to 449 (VLFFLTTNQCFSSVSAVELFV). Topologically, residues 450–477 (VEKKLFIHEYISGYYRVSSYFFGKVMSD) are cytoplasmic. Residues 478-498 (LLPMRFLPSVIFTCVLYFMLG) form a helical membrane-spanning segment. Over 499–506 (LKKTVDAF) the chain is Extracellular. Residues 507–527 (FIMMFTLIMVAYTASSMALAI) traverse the membrane as a helical segment. Residues 528-535 (ATGQSVVS) are Cytoplasmic-facing. The chain crosses the membrane as a helical span at residues 536–556 (VATLLMTIAFVFMMLFSGLLV). Residues 557–632 (NLRTIGPWLS…LSPWGLWKNH (76 aa)) lie on the Extracellular side of the membrane. Cys592 and Cys610 form a disulfide bridge. Residues Asn596 and Asn600 are each glycosylated (N-linked (GlcNAc...) asparagine). Residues 633–653 (VALACMIIIFLTIAYLKLLFL) form a helical membrane-spanning segment. Residues 654–657 (KKYS) are Cytoplasmic-facing.

This sequence belongs to the ABC transporter superfamily. ABCG family. Eye pigment precursor importer (TC 3.A.1.204) subfamily. As to quaternary structure, homodimer; disulfide-linked. The minimal functional unit is a homodimer, but the major oligomeric form in plasma membrane is a homotetramer with possibility of higher order oligomerization up to homododecamers. Post-translationally, N-glycosylated. Glycosylation-deficient ABCG2 is normally expressed and functional. Phosphorylated. Phosphorylation may regulate the localization to the plasma membrane, the homooligomerization and therefore, the activity of the transporter. As to expression, highly expressed in kidney. Lower expression in liver, colon, heart, spleen, and placenta. Expressed in mammary gland. Expressed in intestinal villi and renal proximal tubules, hepatic bile canalicular membranes, and placental labyrinth cells (at protein level).

It localises to the cell membrane. The protein resides in the apical cell membrane. The protein localises to the mitochondrion membrane. It carries out the reaction ATP + H2O + xenobioticSide 1 = ADP + phosphate + xenobioticSide 2.. It catalyses the reaction riboflavin(in) + ATP + H2O = riboflavin(out) + ADP + phosphate + H(+). The catalysed reaction is pheophorbide a(in) + ATP + H2O = pheophorbide a(out) + ADP + phosphate + H(+). The enzyme catalyses urate(in) + ATP + H2O = urate(out) + ADP + phosphate + H(+). It carries out the reaction indoxyl sulfate(in) + ATP + H2O = indoxyl sulfate(out) + ADP + phosphate + H(+). It catalyses the reaction sphing-4-enine 1-phosphate(in) + ATP + H2O = sphing-4-enine 1-phosphate(out) + ADP + phosphate + H(+). The catalysed reaction is estrone 3-sulfate(in) + ATP + H2O = estrone 3-sulfate(out) + ADP + phosphate + H(+). The enzyme catalyses dehydroepiandrosterone 3-sulfate(in) + ATP + H2O = dehydroepiandrosterone 3-sulfate(out) + ADP + phosphate + H(+). It carries out the reaction 4-methylumbelliferone sulfate(in) + ATP + H2O = 4-methylumbelliferone sulfate(out) + ADP + phosphate + H(+). It catalyses the reaction 5,7-dimethyl-2-methylamino-4-(3-pyridylmethyl)-1,3-benzothiazol-6-yl beta-D-glucuronate(in) + ATP + H2O = 5,7-dimethyl-2-methylamino-4-(3-pyridylmethyl)-1,3-benzothiazol-6-yl beta-D-glucuronate(out) + ADP + phosphate + H(+). The catalysed reaction is 4-methylumbelliferone beta-D-glucuronate(in) + ATP + H2O = 4-methylumbelliferone beta-D-glucuronate(out) + ADP + phosphate + H(+). The enzyme catalyses 5,7-dimethyl-2-methylamino-4-(3-pyridylmethyl)-1,3-benzothiazol-6-yl sulfate(in) + ATP + H2O = 5,7-dimethyl-2-methylamino-4-(3-pyridylmethyl)-1,3-benzothiazol-6-yl sulfate(out) + ADP + phosphate + H(+). It carries out the reaction 17beta-estradiol 17-O-(beta-D-glucuronate)(in) + ATP + H2O = 17beta-estradiol 17-O-(beta-D-glucuronate)(out) + ADP + phosphate + H(+). It catalyses the reaction methotrexate(in) + ATP + H2O = methotrexate(out) + ADP + phosphate + H(+). The catalysed reaction is itaconate(in) + ATP + H2O = itaconate(out) + ADP + phosphate + H(+). Its activity is regulated as follows. Specifically inhibited by the fungal toxin fumitremorgin C and Ko143. In terms of biological role, broad substrate specificity ATP-dependent transporter of the ATP-binding cassette (ABC) family that actively extrudes a wide variety of physiological compounds, dietary toxins and xenobiotics from cells. Involved in porphyrin homeostasis, mediating the export of protoporphyrin IX (PPIX) from both mitochondria to cytosol and cytosol to extracellular space, it also functions in the cellular export of heme. Also mediates the efflux of sphingosine-1-P from cells. Acts as a urate exporter functioning in both renal and extrarenal urate excretion. In kidney, it also functions as a physiological exporter of the uremic toxin indoxyl sulfate. Also involved in the excretion of steroids like estrone 3-sulfate/E1S, 3beta-sulfooxy-androst-5-en-17-one/DHEAS, and other sulfate conjugates. Mediates the secretion of the riboflavin and biotin vitamins into milk. Extrudes pheophorbide a, a phototoxic porphyrin catabolite of chlorophyll, reducing its bioavailability. Plays an important role in the exclusion of xenobiotics from the brain. It confers to cells a resistance to multiple drugs and other xenobiotics including mitoxantrone, pheophorbide, camptothecin, methotrexate, azidothymidine, and the anthracyclines daunorubicin and doxorubicin, through the control of their efflux. In placenta, it limits the penetration of drugs from the maternal plasma into the fetus. May play a role in early stem cell self-renewal by blocking differentiation. In inflammatory macrophages, exports itaconate from the cytosol to the extracellular compartment and limits the activation of TFEB-dependent lysosome biogenesis involved in antibacterial innate immune response. In Mus musculus (Mouse), this protein is Broad substrate specificity ATP-binding cassette transporter ABCG2 (Abcg2).